We begin with the raw amino-acid sequence, 608 residues long: Chaperone protein HtpG (608 aa).

Residues 1–332 form an a; substrate-binding region; that stretch reads MQFQTEVNQL…VEDLPLNVSR (332 aa). The segment at 333–536 is b; that stretch reads EILQENQILK…KNKPDFAMQQ (204 aa). The interval 537-608 is c; the sequence is LLKQMGQEQN…LTKIINKAFS (72 aa).

This sequence belongs to the heat shock protein 90 family. As to quaternary structure, homodimer.

Its subcellular location is the cytoplasm. Functionally, molecular chaperone. Has ATPase activity. The sequence is that of Chaperone protein HtpG from Campylobacter jejuni subsp. jejuni serotype O:23/36 (strain 81-176).